Reading from the N-terminus, the 286-residue chain is Energy-coupling factor transporter ATP-binding protein EcfA2 (286 aa).

One can recognise an ABC transporter domain in the interval 3-245 (IKIENLTYTY…IDTLEKVGLA (243 aa)). 40–47 (GHTGSGKS) serves as a coordination point for ATP.

The protein belongs to the ABC transporter superfamily. Energy-coupling factor EcfA family. Forms a stable energy-coupling factor (ECF) transporter complex composed of 2 membrane-embedded substrate-binding proteins (S component), 2 ATP-binding proteins (A component) and 2 transmembrane proteins (T component).

Its subcellular location is the cell membrane. In terms of biological role, ATP-binding (A) component of a common energy-coupling factor (ECF) ABC-transporter complex. Unlike classic ABC transporters this ECF transporter provides the energy necessary to transport a number of different substrates. The sequence is that of Energy-coupling factor transporter ATP-binding protein EcfA2 from Clostridium acetobutylicum (strain ATCC 824 / DSM 792 / JCM 1419 / IAM 19013 / LMG 5710 / NBRC 13948 / NRRL B-527 / VKM B-1787 / 2291 / W).